We begin with the raw amino-acid sequence, 126 residues long: Protein ApaG (126 aa).

In terms of domain architecture, ApaG spans 2–126 (SDPRYQIDVS…FRLAVPGALH (125 aa)).

The sequence is that of Protein ApaG from Pseudomonas putida (strain ATCC 700007 / DSM 6899 / JCM 31910 / BCRC 17059 / LMG 24140 / F1).